Reading from the N-terminus, the 272-residue chain is MAQITMSDMLKAGLHFGHQTRRWNPKMKQFILTQRNGIHIINLFKSLDMIDKAYDFIKATVAHNGTVLFVGTKKQAQEAVSAQATRVNMPYVSERWLGGMLTNFQTVSKRVSRLKELEEMDFTDVHGSGLTKKELLLLEREKDKLAKQLGGIRNMNRTPSAMFVVDVNKEALAVEEAHKLGIPVVAIVDTNADPESVEYPIAANDDAIRGIELLTSLMADAVAEGLLERSGKAAKAEGEAEQPMAAWEKELLTEGAPAAEAPAEAEGETKAE.

Residues 251 to 272 (LLTEGAPAAEAPAEAEGETKAE) are disordered. Residues 253 to 264 (TEGAPAAEAPAE) are compositionally biased toward low complexity.

It belongs to the universal ribosomal protein uS2 family.

The protein is Small ribosomal subunit protein uS2 of Bifidobacterium adolescentis (strain ATCC 15703 / DSM 20083 / NCTC 11814 / E194a).